Here is a 289-residue protein sequence, read N- to C-terminus: Phosphate import ATP-binding protein PstB (289 aa).

Positions 1–37 are disordered; that stretch reads MRSIDRPGGQAARPTIGSVAGASNTRTRDARSLPDTP. The region spanning 41–284 is the ABC transporter domain; that stretch reads AAAENFSFYY…PVRRETEDYI (244 aa). 73-80 is a binding site for ATP; that stretch reads GPSGCGKS.

Belongs to the ABC transporter superfamily. Phosphate importer (TC 3.A.1.7) family. As to quaternary structure, the complex is composed of two ATP-binding proteins (PstB), two transmembrane proteins (PstC and PstA) and a solute-binding protein (PstS).

It localises to the cell inner membrane. The enzyme catalyses phosphate(out) + ATP + H2O = ADP + 2 phosphate(in) + H(+). Its function is as follows. Part of the ABC transporter complex PstSACB involved in phosphate import. Responsible for energy coupling to the transport system. The chain is Phosphate import ATP-binding protein PstB from Aromatoleum aromaticum (strain DSM 19018 / LMG 30748 / EbN1) (Azoarcus sp. (strain EbN1)).